A 117-amino-acid polypeptide reads, in one-letter code: Ribonuclease P protein component (117 aa).

This sequence belongs to the RnpA family. Consists of a catalytic RNA component (M1 or rnpB) and a protein subunit.

It carries out the reaction Endonucleolytic cleavage of RNA, removing 5'-extranucleotides from tRNA precursor.. RNaseP catalyzes the removal of the 5'-leader sequence from pre-tRNA to produce the mature 5'-terminus. It can also cleave other RNA substrates such as 4.5S RNA. The protein component plays an auxiliary but essential role in vivo by binding to the 5'-leader sequence and broadening the substrate specificity of the ribozyme. This chain is Ribonuclease P protein component, found in Thermotoga sp. (strain RQ2).